A 583-amino-acid polypeptide reads, in one-letter code: Pre-mRNA-processing protein 45 (583 aa).

Disordered regions lie at residues methionine 1 to aspartate 68, lysine 177 to glutamate 253, methionine 321 to arginine 424, and arginine 519 to asparagine 583. The segment covering threonine 203–lysine 225 has biased composition (basic and acidic residues). Residues arginine 233–histidine 244 are compositionally biased toward pro residues. Residues leucine 325 to arginine 350 are compositionally biased toward basic and acidic residues. Over residues arginine 367–arginine 377 the composition is skewed to low complexity. 3 stretches are compositionally biased toward basic and acidic residues: residues alanine 386 to arginine 424, arginine 519 to alanine 538, and proline 569 to asparagine 583.

The protein belongs to the SNW family. As to quaternary structure, associated with the spliceosome.

Its subcellular location is the nucleus. Functionally, involved in pre-mRNA splicing. This is Pre-mRNA-processing protein 45 (prp45) from Emericella nidulans (strain FGSC A4 / ATCC 38163 / CBS 112.46 / NRRL 194 / M139) (Aspergillus nidulans).